The following is a 567-amino-acid chain: Proline--tRNA ligase (567 aa).

The protein belongs to the class-II aminoacyl-tRNA synthetase family. ProS type 1 subfamily. Homodimer.

The protein resides in the cytoplasm. It catalyses the reaction tRNA(Pro) + L-proline + ATP = L-prolyl-tRNA(Pro) + AMP + diphosphate. Functionally, catalyzes the attachment of proline to tRNA(Pro) in a two-step reaction: proline is first activated by ATP to form Pro-AMP and then transferred to the acceptor end of tRNA(Pro). As ProRS can inadvertently accommodate and process non-cognate amino acids such as alanine and cysteine, to avoid such errors it has two additional distinct editing activities against alanine. One activity is designated as 'pretransfer' editing and involves the tRNA(Pro)-independent hydrolysis of activated Ala-AMP. The other activity is designated 'posttransfer' editing and involves deacylation of mischarged Ala-tRNA(Pro). The misacylated Cys-tRNA(Pro) is not edited by ProRS. The chain is Proline--tRNA ligase from Streptomyces griseus subsp. griseus (strain JCM 4626 / CBS 651.72 / NBRC 13350 / KCC S-0626 / ISP 5235).